The chain runs to 101 residues: Small ribosomal subunit protein uS14 (101 aa).

The protein belongs to the universal ribosomal protein uS14 family. As to quaternary structure, part of the 30S ribosomal subunit. Contacts proteins S3 and S10.

Binds 16S rRNA, required for the assembly of 30S particles and may also be responsible for determining the conformation of the 16S rRNA at the A site. This Aliivibrio salmonicida (strain LFI1238) (Vibrio salmonicida (strain LFI1238)) protein is Small ribosomal subunit protein uS14.